We begin with the raw amino-acid sequence, 160 residues long: Class B acid phosphatase (160 aa).

An N-terminal signal peptide occupies residues 1–23 (MRKVTLTLSAIALALSLNGAAMA). The active-site Nucleophile is D69. Mg(2+) contacts are provided by D69 and D71. The active-site Proton donor is D71. 137 to 138 (TG) is a binding site for substrate.

This sequence belongs to the class B bacterial acid phosphatase family. Homotetramer. Mg(2+) serves as cofactor.

Its subcellular location is the periplasm. It carries out the reaction a phosphate monoester + H2O = an alcohol + phosphate. Functionally, dephosphorylates several organic phosphate monoesters. Also has a phosphotransferase activity catalyzing the transfer of low-energy phosphate groups from organic phosphate monoesters to free hydroxyl groups of various organic compounds. This Proteus mirabilis protein is Class B acid phosphatase (aphA).